We begin with the raw amino-acid sequence, 219 residues long: Cytochrome c oxidase assembly protein CtaG (219 aa).

Polar residues predominate over residues 1 to 13; the sequence is MDATDQGKSTSTT. The interval 1–24 is disordered; that stretch reads MDATDQGKSTSTTAAQAAPGKAAP. Residues 1–29 lie on the Cytoplasmic side of the membrane; it reads MDATDQGKSTSTTAAQAAPGKAAPRRGIG. Residues 14 to 24 show a composition bias toward low complexity; that stretch reads AAQAAPGKAAP. The chain crosses the membrane as a helical; Signal-anchor for type II membrane protein span at residues 30–52; it reads RDALVGGICGAVVVLMIGASYAA. Topologically, residues 53–219 are periplasmic; that stretch reads VPFYNWFCRA…GEPDKPRGSL (167 aa).

It belongs to the COX11/CtaG family.

It is found in the cell inner membrane. Exerts its effect at some terminal stage of cytochrome c oxidase synthesis, probably by being involved in the insertion of the copper B into subunit I. This is Cytochrome c oxidase assembly protein CtaG from Bradyrhizobium sp. (strain ORS 278).